Consider the following 562-residue polypeptide: MNMNPRHNIREIRAPRGPELSAKSWMTEAPLRMLMNNLDPDVAENPHELVVYGGIGRAARTWEDFDRITAALKTLSEEETLLVQSGKPVGVFRTHKDAPRVLIANSNLVPHWATWDHFNELDKKGLAMYGQMTAGSWIYIGTQGIVQGTYETFVEAGRQHYDGNLKGKWILTGGLGGMGGAQPLAAVMAGACCLAVECDETRIDFRLRTRYVDAKARTLDEALAMIDMWTKAGEAKSVGLLGNAAEIFPELVRRMKAGGPRPDIVTDQTSAHDPRNGYLPVGWTVEEARAKRESDPKSVEIAARASMRAQVEAMVAFWDAGIPTLDYGNNIRQVAKDEGLENAFAFPGFVPAYIRPLFCRGIGPFRWAALSGDPEDIYKTDAKVKELLPDNKHLHNWLDMAKERISFQGLPARICWVGLGDRQKLGLAFNEMVRNGELSAPIVIGRDHLDSGSVASPNRETEAMKDGSDAVSDWPLLNALLNTASGATWVSLHHGGGVGMGFSQHAGMVICADGSEDANRRLERVLWNDPATGVMRHADAGYEIAVDCAKEKGLRLPGILGN.

NAD(+) contacts are provided by residues 53–54 (GG), Gln131, 177–179 (GMG), Glu197, Arg202, 243–244 (NA), 268–272 (QTSAH), 278–279 (YL), and Tyr327. Cys415 is an active-site residue. Gly497 lines the NAD(+) pocket.

Belongs to the urocanase family. NAD(+) is required as a cofactor.

Its subcellular location is the cytoplasm. It catalyses the reaction 4-imidazolone-5-propanoate = trans-urocanate + H2O. Its pathway is amino-acid degradation; L-histidine degradation into L-glutamate; N-formimidoyl-L-glutamate from L-histidine: step 2/3. Functionally, catalyzes the conversion of urocanate to 4-imidazolone-5-propionate. The chain is Urocanate hydratase from Chelativorans sp. (strain BNC1).